A 70-amino-acid polypeptide reads, in one-letter code: Guanine nucleotide-binding protein G(I)/G(S)/G(O) subunit gamma-8 (70 aa).

Cys67 carries the cysteine methyl ester modification. Cys67 is lipidated: S-geranylgeranyl cysteine. Residues Thr68 to Leu70 constitute a propeptide, removed in mature form.

This sequence belongs to the G protein gamma family. As to quaternary structure, g proteins are composed of 3 units, alpha, beta and gamma. Detected in the olfactory epithelium, the vomeronasal epithelium and, to a lesser extent, the olfactory bulb.

The protein resides in the cell membrane. In terms of biological role, guanine nucleotide-binding proteins (G proteins) are involved as a modulator or transducer in various transmembrane signaling systems. The beta and gamma chains are required for the GTPase activity, for replacement of GDP by GTP, and for G protein-effector interaction. This subunit may have a very specific role in the development and turnover of olfactory and vomeronasal neurons. The sequence is that of Guanine nucleotide-binding protein G(I)/G(S)/G(O) subunit gamma-8 (Gng8) from Rattus norvegicus (Rat).